The chain runs to 138 residues: Phosphoribosyl-AMP cyclohydrolase (138 aa).

Residue aspartate 92 coordinates Mg(2+). Residue cysteine 93 coordinates Zn(2+). Mg(2+) is bound by residues aspartate 94 and aspartate 96. Cysteine 109 and cysteine 116 together coordinate Zn(2+).

The protein belongs to the PRA-CH family. Homodimer. The cofactor is Mg(2+). Requires Zn(2+) as cofactor.

It is found in the cytoplasm. It carries out the reaction 1-(5-phospho-beta-D-ribosyl)-5'-AMP + H2O = 1-(5-phospho-beta-D-ribosyl)-5-[(5-phospho-beta-D-ribosylamino)methylideneamino]imidazole-4-carboxamide. It functions in the pathway amino-acid biosynthesis; L-histidine biosynthesis; L-histidine from 5-phospho-alpha-D-ribose 1-diphosphate: step 3/9. Its function is as follows. Catalyzes the hydrolysis of the adenine ring of phosphoribosyl-AMP. This is Phosphoribosyl-AMP cyclohydrolase from Clavibacter sepedonicus (Clavibacter michiganensis subsp. sepedonicus).